Consider the following 343-residue polypeptide: N-acetyl-gamma-glutamyl-phosphate reductase (343 aa).

Cys146 is a catalytic residue.

The protein belongs to the NAGSA dehydrogenase family. Type 1 subfamily.

It localises to the cytoplasm. The enzyme catalyses N-acetyl-L-glutamate 5-semialdehyde + phosphate + NADP(+) = N-acetyl-L-glutamyl 5-phosphate + NADPH + H(+). The protein operates within amino-acid biosynthesis; L-arginine biosynthesis; N(2)-acetyl-L-ornithine from L-glutamate: step 3/4. Its function is as follows. Catalyzes the NADPH-dependent reduction of N-acetyl-5-glutamyl phosphate to yield N-acetyl-L-glutamate 5-semialdehyde. The polypeptide is N-acetyl-gamma-glutamyl-phosphate reductase (Pseudarthrobacter chlorophenolicus (strain ATCC 700700 / DSM 12829 / CIP 107037 / JCM 12360 / KCTC 9906 / NCIMB 13794 / A6) (Arthrobacter chlorophenolicus)).